An 838-amino-acid chain; its full sequence is Alpha-glucan phosphorylase, H isozyme (838 aa).

Positions 1–21 (MEGGAKSNDVSAAPIAQPLSE) are disordered. K684 carries the post-translational modification N6-(pyridoxal phosphate)lysine.

It belongs to the glycogen phosphorylase family. Pyridoxal 5'-phosphate serves as cofactor.

Its subcellular location is the cytoplasm. The enzyme catalyses [(1-&gt;4)-alpha-D-glucosyl](n) + phosphate = [(1-&gt;4)-alpha-D-glucosyl](n-1) + alpha-D-glucose 1-phosphate. In terms of biological role, phosphorylase is an important allosteric enzyme in carbohydrate metabolism. Enzymes from different sources differ in their regulatory mechanisms and in their natural substrates. However, all known phosphorylases share catalytic and structural properties. The chain is Alpha-glucan phosphorylase, H isozyme from Solanum tuberosum (Potato).